Here is a 114-residue protein sequence, read N- to C-terminus: Dolichyl-diphosphooligosaccharide--protein glycosyltransferase subunit DAD2 (114 aa).

The Cytoplasmic segment spans residues 1–30 (MPKAAGDAKLLIQSLNKAYAATPTNLKIID). A helical membrane pass occupies residues 31–51 (LYVVFAVATALVQVVYMGIVG). Residues 52 to 54 (SFP) lie on the Lumenal side of the membrane. A helical transmembrane segment spans residues 55-75 (FNSFLSGVLSSIGTAVLGVCL). The Cytoplasmic segment spans residues 76–93 (RIQVNKDNKEFKDLPPER). The chain crosses the membrane as a helical span at residues 94–114 (AFADFVLCNLVLHLVIMNFLG).

Belongs to the DAD/OST2 family. In terms of assembly, component of the oligosaccharyltransferase (OST) complex.

The protein localises to the endoplasmic reticulum membrane. Its pathway is protein modification; protein glycosylation. Functionally, subunit of the oligosaccharyl transferase (OST) complex that catalyzes the initial transfer of a defined glycan (Glc(3)Man(9)GlcNAc(2) in eukaryotes) from the lipid carrier dolichol-pyrophosphate to an asparagine residue within an Asn-X-Ser/Thr consensus motif in nascent polypeptide chains, the first step in protein N-glycosylation. N-glycosylation occurs cotranslationally and the complex associates with the Sec61 complex at the channel-forming translocon complex that mediates protein translocation across the endoplasmic reticulum (ER). All subunits are required for a maximal enzyme activity. This Hordeum vulgare (Barley) protein is Dolichyl-diphosphooligosaccharide--protein glycosyltransferase subunit DAD2 (DAD2).